A 100-amino-acid chain; its full sequence is Putative protein p52 (100 aa).

A disordered region spans residues 81–100 (PKSFKSSTDTAHSDRWLSLG). Residues 91–100 (AHSDRWLSLG) show a composition bias toward basic and acidic residues.

The protein is Putative protein p52 (52) of Escherichia coli (Bacteriophage APSE-1).